The following is a 293-amino-acid chain: ESX-3 secretion-associated protein EspG3 (293 aa).

Belongs to the EspG family.

The protein localises to the cytoplasm. In Mycolicibacterium smegmatis (strain ATCC 700084 / mc(2)155) (Mycobacterium smegmatis), this protein is ESX-3 secretion-associated protein EspG3.